Reading from the N-terminus, the 106-residue chain is Prothymosin alpha-B (106 aa).

Over residues 1–39 (MADAKVDSATEISAKDLKEKKLIEEKENGKDATNGKENE) the composition is skewed to basic and acidic residues. Residues 1–106 (MADAKVDSAT…DVDPKKQKVN (106 aa)) are disordered. Serine 8 carries the post-translational modification Phosphoserine. Position 10 is a phosphothreonine (threonine 10). Acidic residues-rich tracts occupy residues 40–76 (ENGE…DEDL) and 85–98 (DDDE…EDDV).

Belongs to the pro/parathymosin family. As to expression, uniformly expressed in all embryonic cells at 4 and 8 hpf. At the 20-somite stage (18 hpf), ubiquitously expressed in the developing nervous system, in the tail bud and in the pronephric ducts. Also expressed in some placodes, including the anterior lateral line placode, otic vesicle and olfactory placode. At 27 hpf, strong expression persists in the central nervous system and the olfactory placode. Expressed strongly in the eyes and the pectoral fin buds. In the tail region, expressed in the spinal cord, in the posterior lateral line precursors, and persists in the pronephric ducts. At 48 hpf, expressed in all head territories including the developing brain, eyes, and pharyngeal arches. More caudally, expression persists in the pectoral fin buds, the spinal cord and, for the first time, appears in the intestine. At 72 hpf, expressed only in restricted regions of the brain, in pharyngeal arches region and in the amacrine cells and the horizontal cells of the retina.

It is found in the nucleus. The sequence is that of Prothymosin alpha-B from Danio rerio (Zebrafish).